A 154-amino-acid chain; its full sequence is Myoglobin (154 aa).

The Globin domain maps to 2-148 (GLSDGEWQMV…FRNDIAAKYK (147 aa)). Phosphoserine is present on residues serine 4 and serine 32. A nitrite-binding site is contributed by histidine 65. Histidine 65 serves as a coordination point for O2. Threonine 68 bears the Phosphothreonine mark. Histidine 94 serves as a coordination point for heme b. Phosphoserine occurs at positions 121 and 133.

Belongs to the globin family. In terms of assembly, monomeric.

Its subcellular location is the cytoplasm. It localises to the sarcoplasm. It carries out the reaction Fe(III)-heme b-[protein] + nitric oxide + H2O = Fe(II)-heme b-[protein] + nitrite + 2 H(+). The catalysed reaction is H2O2 + AH2 = A + 2 H2O. Monomeric heme protein which primary function is to store oxygen and facilitate its diffusion within muscle tissues. Reversibly binds oxygen through a pentacoordinated heme iron and enables its timely and efficient release as needed during periods of heightened demand. Depending on the oxidative conditions of tissues and cells, and in addition to its ability to bind oxygen, it also has a nitrite reductase activity whereby it regulates the production of bioactive nitric oxide. Under stress conditions, like hypoxia and anoxia, it also protects cells against reactive oxygen species thanks to its pseudoperoxidase activity. The protein is Myoglobin of Rattus norvegicus (Rat).